A 467-amino-acid chain; its full sequence is ATP synthase subunit beta (467 aa).

Position 156 to 163 (156 to 163 (GGAGVGKT)) interacts with ATP.

This sequence belongs to the ATPase alpha/beta chains family. In terms of assembly, F-type ATPases have 2 components, CF(1) - the catalytic core - and CF(0) - the membrane proton channel. CF(1) has five subunits: alpha(3), beta(3), gamma(1), delta(1), epsilon(1). CF(0) has three main subunits: a(1), b(2) and c(9-12). The alpha and beta chains form an alternating ring which encloses part of the gamma chain. CF(1) is attached to CF(0) by a central stalk formed by the gamma and epsilon chains, while a peripheral stalk is formed by the delta and b chains.

It localises to the cell inner membrane. The enzyme catalyses ATP + H2O + 4 H(+)(in) = ADP + phosphate + 5 H(+)(out). Functionally, produces ATP from ADP in the presence of a proton gradient across the membrane. The catalytic sites are hosted primarily by the beta subunits. This is ATP synthase subunit beta from Ralstonia nicotianae (strain ATCC BAA-1114 / GMI1000) (Ralstonia solanacearum).